Here is a 220-residue protein sequence, read N- to C-terminus: CASP-like protein 4B1 (220 aa).

The Cytoplasmic segment spans residues 1 to 74 (MAMVTTEAAA…RWRREDMLDK (74 aa)). The tract at residues 13-56 (TTAATAAAEKPQDVEKPDYAPYNGASTTADGGTGARARRGDGGG) is disordered. Residues 75-95 (SPLALHAAAAIFAFVALVLVA) traverse the membrane as a helical segment. Residues 96-109 (SNQHGDWMQFDRYQ) are Extracellular-facing. Residues 110–127 (EYRYLLAIASLALLYSLA) traverse the membrane as a helical segment. The Cytoplasmic portion of the chain corresponds to 128-152 (QAARHAHRMRGGVDPVSSASARLLD). The chain crosses the membrane as a helical span at residues 153–173 (FVGDQVVAYLLMSALSAAVPI). Residues 174–188 (TNRMRSAVVNNFTDA) are Extracellular-facing. Residue Asn-184 is glycosylated (N-linked (GlcNAc...) asparagine). A helical membrane pass occupies residues 189–209 (TAAAISMAFFSFVALALSAVV). Residues 210–220 (SGYKLSKQTYM) are Cytoplasmic-facing.

It belongs to the Casparian strip membrane proteins (CASP) family. Homodimer and heterodimers.

The protein resides in the cell membrane. The polypeptide is CASP-like protein 4B1 (Sorghum bicolor (Sorghum)).